Here is a 508-residue protein sequence, read N- to C-terminus: GMP synthase [glutamine-hydrolyzing] (508 aa).

In terms of domain architecture, Glutamine amidotransferase type-1 spans 1 to 189; it reads MIVVLDFGSQ…ALLVCGCEKT (189 aa). C78 serves as the catalytic Nucleophile. Catalysis depends on residues H163 and E165. One can recognise a GMPS ATP-PPase domain in the interval 190–383; sequence WGMQNFAQKE…LGVSQDFLMR (194 aa). An ATP-binding site is contributed by 217–223; that stretch reads SGGVDST.

Homodimer.

It catalyses the reaction XMP + L-glutamine + ATP + H2O = GMP + L-glutamate + AMP + diphosphate + 2 H(+). It participates in purine metabolism; GMP biosynthesis; GMP from XMP (L-Gln route): step 1/1. In terms of biological role, catalyzes the synthesis of GMP from XMP. The polypeptide is GMP synthase [glutamine-hydrolyzing] (Helicobacter acinonychis (strain Sheeba)).